A 123-amino-acid chain; its full sequence is cAMP-responsive element-binding protein-like 2 (123 aa).

Residues 1 to 24 form a disordered region; sequence MDDSKVVGGKVKKPGKRGRKPAKI. Positions 10–21 are enriched in basic residues; the sequence is KVKKPGKRGRKP. In terms of domain architecture, bZIP spans 23-86; sequence KIDLKAKLER…MAMDQGKIPS (64 aa). Residues 29-60 form a basic motif region; that stretch reads KLERSRQSARECRARKKLRYQYLEELVSSRER. The leucine-zipper stretch occupies residues 62 to 69; that stretch reads ICALREEL. The segment at 92–123 is disordered; it reads LTGEEQSKPQQNSSRHPKAGKTDANTNSLVGN. The segment covering 114–123 has biased composition (polar residues); it reads DANTNSLVGN.

This sequence belongs to the bZIP family. ATF subfamily. As to quaternary structure, interacts with CREB1; regulates CREB1 phosphorylation, stability and transcriptional activity. Post-translationally, phosphorylated by AMPK. As to expression, widely expressed with higher expression in adipose tissue, skeletal muscle, and liver (at protein level).

It localises to the nucleus. Its function is as follows. Probable regulator of CREB1 transcriptional activity which is involved in adipose cells differentiation. May also play a regulatory role in the cell cycle. In Mus musculus (Mouse), this protein is cAMP-responsive element-binding protein-like 2 (Crebl2).